Here is a 434-residue protein sequence, read N- to C-terminus: Glucose-6-phosphate 1-dehydrogenase (434 aa).

Residues 7-14 (GSSGDLAK), arginine 36, tyrosine 93, and lysine 112 each bind NADP(+). D-glucose 6-phosphate-binding positions include lysine 112, 137–141 (HYLLK), glutamate 175, and aspartate 193. Histidine 198 (proton acceptor) is an active-site residue. The D-glucose 6-phosphate site is built by lysine 280 and lysine 285. Arginine 286 provides a ligand contact to NADP(+).

It belongs to the glucose-6-phosphate dehydrogenase family.

It catalyses the reaction D-glucose 6-phosphate + NADP(+) = 6-phospho-D-glucono-1,5-lactone + NADPH + H(+). Its pathway is carbohydrate degradation; pentose phosphate pathway; D-ribulose 5-phosphate from D-glucose 6-phosphate (oxidative stage): step 1/3. In terms of biological role, catalyzes the rate-limiting step of the oxidative pentose-phosphate pathway, which represents a route for the dissimilation of carbohydrates besides glycolysis. The main function of this enzyme is to provide reducing power (NADPH) and pentose phosphates for fatty acid and nucleic acid synthesis. The chain is Glucose-6-phosphate 1-dehydrogenase (ZWF1) from Encephalitozoon cuniculi (strain GB-M1) (Microsporidian parasite).